The sequence spans 704 residues: Elongation factor G (704 aa).

The tr-type G domain occupies 9-285 (AKVRNIGIMA…AIVAYLPSPL (277 aa)). Residues 18-25 (AHIDAGKT), 82-86 (DTPGH), and 136-139 (NKMD) each bind GTP.

The protein belongs to the TRAFAC class translation factor GTPase superfamily. Classic translation factor GTPase family. EF-G/EF-2 subfamily.

The protein localises to the cytoplasm. In terms of biological role, catalyzes the GTP-dependent ribosomal translocation step during translation elongation. During this step, the ribosome changes from the pre-translocational (PRE) to the post-translocational (POST) state as the newly formed A-site-bound peptidyl-tRNA and P-site-bound deacylated tRNA move to the P and E sites, respectively. Catalyzes the coordinated movement of the two tRNA molecules, the mRNA and conformational changes in the ribosome. In Thermobifida fusca (strain YX), this protein is Elongation factor G.